Consider the following 299-residue polypeptide: Acetylglutamate kinase (299 aa).

Substrate is bound by residues 70–71 (GG), Arg92, and Asn186.

It belongs to the acetylglutamate kinase family. ArgB subfamily.

It is found in the cytoplasm. It carries out the reaction N-acetyl-L-glutamate + ATP = N-acetyl-L-glutamyl 5-phosphate + ADP. Its pathway is amino-acid biosynthesis; L-arginine biosynthesis; N(2)-acetyl-L-ornithine from L-glutamate: step 2/4. Functionally, catalyzes the ATP-dependent phosphorylation of N-acetyl-L-glutamate. This is Acetylglutamate kinase from Petrotoga mobilis (strain DSM 10674 / SJ95).